The following is a 681-amino-acid chain: Methionine--tRNA ligase (681 aa).

Residues 15-25 (PYANGPIHLGH) carry the 'HIGH' region motif. Residues Cys146, Cys149, Cys159, and Cys162 each contribute to the Zn(2+) site. The short motif at 332–336 (KMSKS) is the 'KMSKS' region element. Residue Lys335 coordinates ATP. Residues 547–569 (DNMAQAPKDNGKAKKDKKEAKSE) are disordered. The span at 555-569 (DNGKAKKDKKEAKSE) shows a compositional bias: basic and acidic residues. Positions 580–681 (DFAKIDLRIA…SGAQPGMQVK (102 aa)) constitute a tRNA-binding domain.

The protein belongs to the class-I aminoacyl-tRNA synthetase family. MetG type 1 subfamily. Homodimer. Zn(2+) serves as cofactor.

It is found in the cytoplasm. The catalysed reaction is tRNA(Met) + L-methionine + ATP = L-methionyl-tRNA(Met) + AMP + diphosphate. Its function is as follows. Is required not only for elongation of protein synthesis but also for the initiation of all mRNA translation through initiator tRNA(fMet) aminoacylation. The polypeptide is Methionine--tRNA ligase (Hahella chejuensis (strain KCTC 2396)).